Consider the following 62-residue polypeptide: Photosystem II reaction center protein Z (62 aa).

Helical transmembrane passes span 8-28 (AVFA…VVFA) and 41-61 (FSGT…NSLI).

This sequence belongs to the PsbZ family. As to quaternary structure, PSII is composed of 1 copy each of membrane proteins PsbA, PsbB, PsbC, PsbD, PsbE, PsbF, PsbH, PsbI, PsbJ, PsbK, PsbL, PsbM, PsbT, PsbY, PsbZ, Psb30/Ycf12, at least 3 peripheral proteins of the oxygen-evolving complex and a large number of cofactors. It forms dimeric complexes.

The protein localises to the plastid. It is found in the chloroplast thylakoid membrane. In terms of biological role, may control the interaction of photosystem II (PSII) cores with the light-harvesting antenna, regulates electron flow through the 2 photosystem reaction centers. PSII is a light-driven water plastoquinone oxidoreductase, using light energy to abstract electrons from H(2)O, generating a proton gradient subsequently used for ATP formation. The chain is Photosystem II reaction center protein Z from Cucumis sativus (Cucumber).